Consider the following 349-residue polypeptide: Phosphoribosylformylglycinamidine cyclo-ligase (349 aa).

This sequence belongs to the AIR synthase family.

It localises to the cytoplasm. The enzyme catalyses 2-formamido-N(1)-(5-O-phospho-beta-D-ribosyl)acetamidine + ATP = 5-amino-1-(5-phospho-beta-D-ribosyl)imidazole + ADP + phosphate + H(+). Its pathway is purine metabolism; IMP biosynthesis via de novo pathway; 5-amino-1-(5-phospho-D-ribosyl)imidazole from N(2)-formyl-N(1)-(5-phospho-D-ribosyl)glycinamide: step 2/2. This is Phosphoribosylformylglycinamidine cyclo-ligase from Psychrobacter cryohalolentis (strain ATCC BAA-1226 / DSM 17306 / VKM B-2378 / K5).